The chain runs to 165 residues: Small ribosomal subunit protein uS5 (165 aa).

The S5 DRBM domain maps to 10–73 (LKEKVVSISR…EDAKKNLVEV (64 aa)).

This sequence belongs to the universal ribosomal protein uS5 family. In terms of assembly, part of the 30S ribosomal subunit. Contacts proteins S4 and S8.

In terms of biological role, with S4 and S12 plays an important role in translational accuracy. Its function is as follows. Located at the back of the 30S subunit body where it stabilizes the conformation of the head with respect to the body. This is Small ribosomal subunit protein uS5 from Clostridium perfringens (strain ATCC 13124 / DSM 756 / JCM 1290 / NCIMB 6125 / NCTC 8237 / Type A).